Reading from the N-terminus, the 614-residue chain is 1-deoxy-D-xylulose-5-phosphate synthase (614 aa).

Thiamine diphosphate contacts are provided by residues His-74 and 115 to 117; that span reads AHS. Asp-146 contacts Mg(2+). Thiamine diphosphate is bound by residues 147 to 148, Asn-175, Tyr-282, and Glu-363; that span reads GA. Asn-175 contributes to the Mg(2+) binding site.

The protein belongs to the transketolase family. DXPS subfamily. In terms of assembly, homodimer. Mg(2+) serves as cofactor. Thiamine diphosphate is required as a cofactor.

It carries out the reaction D-glyceraldehyde 3-phosphate + pyruvate + H(+) = 1-deoxy-D-xylulose 5-phosphate + CO2. The protein operates within metabolic intermediate biosynthesis; 1-deoxy-D-xylulose 5-phosphate biosynthesis; 1-deoxy-D-xylulose 5-phosphate from D-glyceraldehyde 3-phosphate and pyruvate: step 1/1. In terms of biological role, catalyzes the acyloin condensation reaction between C atoms 2 and 3 of pyruvate and glyceraldehyde 3-phosphate to yield 1-deoxy-D-xylulose-5-phosphate (DXP). In Nitrosospira multiformis (strain ATCC 25196 / NCIMB 11849 / C 71), this protein is 1-deoxy-D-xylulose-5-phosphate synthase.